A 615-amino-acid chain; its full sequence is Gluconate 2-dehydrogenase flavoprotein (615 aa).

The first 22 residues, 1-22 (MERGERVSVPVSGYSRGEGVTV), serve as a signal peptide directing secretion. The active-site Proton acceptor is the histidine 542.

The protein belongs to the GMC oxidoreductase family. Heterotrimer. FAD serves as cofactor.

The protein resides in the cell membrane. The enzyme catalyses D-gluconate + A = 2-dehydro-D-gluconate + AH2. In terms of biological role, part of the heterotrimer that catalyzes the conversion of D-gluconate to 2-dehydro-D-gluconate. This subunit functions as the dehydrogenase. This chain is Gluconate 2-dehydrogenase flavoprotein, found in Pantoea cypripedii (Pectobacterium cypripedii).